Here is a 278-residue protein sequence, read N- to C-terminus: Elongation factor Ts (278 aa).

Residues 80 to 83 are involved in Mg(2+) ion dislocation from EF-Tu; sequence TDFV.

Belongs to the EF-Ts family.

It localises to the cytoplasm. Functionally, associates with the EF-Tu.GDP complex and induces the exchange of GDP to GTP. It remains bound to the aminoacyl-tRNA.EF-Tu.GTP complex up to the GTP hydrolysis stage on the ribosome. This chain is Elongation factor Ts, found in Arthrobacter sp. (strain FB24).